The sequence spans 713 residues: Protein tyrosine phosphatase domain-containing protein 1 (713 aa).

In terms of domain architecture, Tyrosine-protein phosphatase spans 80–251 (YSSWITDHLL…LVPLRSVFSC (172 aa)). Cys188 (phosphocysteine intermediate) is an active-site residue.

It belongs to the protein-tyrosine phosphatase family. Non-receptor class PTPDC1 subfamily.

May play roles in cilia formation and/or maintenance. This Danio rerio (Zebrafish) protein is Protein tyrosine phosphatase domain-containing protein 1 (ptpdc1).